Here is a 1060-residue protein sequence, read N- to C-terminus: Carbamoyl phosphate synthase large chain (1060 aa).

The tract at residues 1-401 (MPKRTDIRKI…SLLKACRSLE (401 aa)) is carboxyphosphate synthetic domain. Residues R129, R169, G175, G176, R208, I210, E215, G241, I242, H243, Q284, and E298 each contribute to the ATP site. One can recognise an ATP-grasp 1 domain in the interval 133–327 (KQLMEELNQP…IAKLAAKIAV (195 aa)). Residues Q284, E298, and N300 each contribute to the Mg(2+) site. The Mn(2+) site is built by Q284, E298, and N300. The segment at 402–546 (IGVDHIKIAD…YSTYAVENES (145 aa)) is oligomerization domain. The segment at 547–929 (LISDKASILV…ALYKAFEAAY (383 aa)) is carbamoyl phosphate synthetic domain. In terms of domain architecture, ATP-grasp 2 spans 671–861 (EATLQALNIP…MAQVATKVIL (191 aa)). R707, A746, L748, E752, G777, V778, H779, S780, Q820, and E832 together coordinate ATP. 3 residues coordinate Mg(2+): Q820, E832, and N834. 3 residues coordinate Mn(2+): Q820, E832, and N834. The 131-residue stretch at 930-1060 (LHMPDYGNIV…SRAFTLKVLD (131 aa)) folds into the MGS-like domain. Positions 930-1060 (LHMPDYGNIV…SRAFTLKVLD (131 aa)) are allosteric domain.

The protein belongs to the CarB family. As to quaternary structure, composed of two chains; the small (or glutamine) chain promotes the hydrolysis of glutamine to ammonia, which is used by the large (or ammonia) chain to synthesize carbamoyl phosphate. Tetramer of heterodimers (alpha,beta)4. The cofactor is Mg(2+). Mn(2+) serves as cofactor.

The catalysed reaction is hydrogencarbonate + L-glutamine + 2 ATP + H2O = carbamoyl phosphate + L-glutamate + 2 ADP + phosphate + 2 H(+). It carries out the reaction hydrogencarbonate + NH4(+) + 2 ATP = carbamoyl phosphate + 2 ADP + phosphate + 2 H(+). It participates in amino-acid biosynthesis; L-arginine biosynthesis; carbamoyl phosphate from bicarbonate: step 1/1. Its pathway is pyrimidine metabolism; UMP biosynthesis via de novo pathway; (S)-dihydroorotate from bicarbonate: step 1/3. In terms of biological role, large subunit of the glutamine-dependent carbamoyl phosphate synthetase (CPSase). CPSase catalyzes the formation of carbamoyl phosphate from the ammonia moiety of glutamine, carbonate, and phosphate donated by ATP, constituting the first step of 2 biosynthetic pathways, one leading to arginine and/or urea and the other to pyrimidine nucleotides. The large subunit (synthetase) binds the substrates ammonia (free or transferred from glutamine from the small subunit), hydrogencarbonate and ATP and carries out an ATP-coupled ligase reaction, activating hydrogencarbonate by forming carboxy phosphate which reacts with ammonia to form carbamoyl phosphate. This Streptococcus agalactiae serotype III (strain NEM316) protein is Carbamoyl phosphate synthase large chain.